The sequence spans 258 residues: uncharacterized protein (258 aa).

7 helical membrane-spanning segments follow: residues 8 to 28 (VFLALSGAIAFLLPIGLIVWF), 38 to 58 (VFFIGALTFFVFAQLLEGGVH), 70 to 90 (EAMQHPLWYGIYGCLMAGIFE), 121 to 141 (LEAILITGLSSISLIVYAFAI), 176 to 196 (LGGIERISAIAVQIGLSLLVL), 204 to 224 (PLFLLYSILLHALFNVPAVLY), and 231 to 251 (HAAAVEIIVALIAALSVYWIV).

The protein resides in the cell membrane. This is an uncharacterized protein from Bacillus subtilis (strain 168).